Consider the following 206-residue polypeptide: Small ribosomal subunit protein uS4 (206 aa).

Positions 96-156 (GRLDNVVYRM…EKAKKQSRVK (61 aa)) constitute an S4 RNA-binding domain.

The protein belongs to the universal ribosomal protein uS4 family. In terms of assembly, part of the 30S ribosomal subunit. Contacts protein S5. The interaction surface between S4 and S5 is involved in control of translational fidelity.

Functionally, one of the primary rRNA binding proteins, it binds directly to 16S rRNA where it nucleates assembly of the body of the 30S subunit. Its function is as follows. With S5 and S12 plays an important role in translational accuracy. In Salmonella agona (strain SL483), this protein is Small ribosomal subunit protein uS4.